Here is a 108-residue protein sequence, read N- to C-terminus: UPF0060 membrane protein Mvan_3406 (108 aa).

4 helical membrane-spanning segments follow: residues 7-27, 32-52, 61-81, and 87-107; these read LLFV…WQGV, GLTW…VAAF, VLAA…VVAD, and RWDI…MYAP.

Belongs to the UPF0060 family.

Its subcellular location is the cell membrane. The sequence is that of UPF0060 membrane protein Mvan_3406 from Mycolicibacterium vanbaalenii (strain DSM 7251 / JCM 13017 / BCRC 16820 / KCTC 9966 / NRRL B-24157 / PYR-1) (Mycobacterium vanbaalenii).